The chain runs to 353 residues: tRNA-specific 2-thiouridylase MnmA (353 aa).

ATP is bound by residues 6 to 13 and Leu32; that span reads GMSGGVDS. The active-site Nucleophile is the Cys99. A disulfide bridge links Cys99 with Cys197. ATP is bound at residue Gly124. The interval 147-149 is interaction with tRNA; it reads KDQ. Cys197 functions as the Cysteine persulfide intermediate in the catalytic mechanism. Residues 303 to 304 are interaction with tRNA; that stretch reads RY.

This sequence belongs to the MnmA/TRMU family.

It is found in the cytoplasm. It catalyses the reaction S-sulfanyl-L-cysteinyl-[protein] + uridine(34) in tRNA + AH2 + ATP = 2-thiouridine(34) in tRNA + L-cysteinyl-[protein] + A + AMP + diphosphate + H(+). Functionally, catalyzes the 2-thiolation of uridine at the wobble position (U34) of tRNA, leading to the formation of s(2)U34. The sequence is that of tRNA-specific 2-thiouridylase MnmA from Persephonella marina (strain DSM 14350 / EX-H1).